The sequence spans 462 residues: Calcitonin gene-related peptide type 1 receptor (462 aa).

The signal sequence occupies residues 1 to 22; that stretch reads MEKKYILYFLFLLPFFMILVIA. At 23-140 the chain is on the extracellular side; that stretch reads ETEEENPDDL…NTHEKVQTAL (118 aa). Disulfide bonds link cysteine 49–cysteine 75, cysteine 66–cysteine 106, and cysteine 89–cysteine 128. Residues asparagine 67, asparagine 119, and asparagine 124 are each glycosylated (N-linked (GlcNAc...) asparagine). A helical membrane pass occupies residues 141-165; the sequence is NLFYLTIIGHGLSIASLLISLGIFF. The Cytoplasmic portion of the chain corresponds to 166 to 176; sequence YFKSLSCQRIT. A helical transmembrane segment spans residues 177–199; it reads LHKNLFFSFVCNSIVTIIHLTAV. The Extracellular portion of the chain corresponds to 200-210; it reads ANNQALVATNP. A helical membrane pass occupies residues 211–239; sequence VSCKVFQFIHLYLMGCNYFWMLCEGIYLH. Over 240 to 253 the chain is Cytoplasmic; it reads TLIVVAVFAEKQHL. A helical transmembrane segment spans residues 254 to 274; the sequence is MWYYFLGWGFPLIPACIHAVA. Residues 275–290 lie on the Extracellular side of the membrane; that stretch reads RRLYYNDNCWISSDTH. The interval 289–290 is required for RAMP3 interaction; it reads TH. A helical membrane pass occupies residues 291-315; that stretch reads LLYIIHGPICAALLVNLFFLLNIVR. The Cytoplasmic portion of the chain corresponds to 316–330; the sequence is VLITKLKVTHQAESN. A helical transmembrane segment spans residues 331–352; the sequence is LYMKAVRATLILVPLLGIEFVL. Over 353–367 the chain is Extracellular; the sequence is IPWRPEGKIAEEVYD. A helical transmembrane segment spans residues 368-388; sequence YIMHILVHYQGLLVSTIYCFF. At 389–462 the chain is on the cytoplasmic side; the sequence is NGEVQAILRR…IVIKPEKLYD (74 aa). Serine 421 and serine 446 each carry phosphoserine.

It belongs to the G-protein coupled receptor 2 family. Heterodimer of CALCRL and RAMP1; the receptor complex functions as CGRP receptor. Heterodimer of CALCRL and RAMP2 or CALCRL and RAMP3; the complexes function as adrenomedullin receptor. In terms of tissue distribution, detected in lung and coronary artery.

It is found in the cell membrane. G protein-coupled receptor which specificity is determined by its interaction with receptor-activity-modifying proteins (RAMPs). Together with RAMP1, form the receptor complex for calcitonin-gene-related peptides CALCA/CGRP1 and CALCB/CGRP2. Together with RAMP2 or RAMP3, function as receptor complexes for adrenomedullin (ADM and ADM2). Ligand binding causes a conformation change that triggers signaling via guanine nucleotide-binding proteins (G proteins) and modulates the activity of downstream effectors. Activates cAMP-dependent pathway. The sequence is that of Calcitonin gene-related peptide type 1 receptor (CALCRL) from Sus scrofa (Pig).